We begin with the raw amino-acid sequence, 473 residues long: Beta-secretase 1 (473 aa).

The signal sequence occupies residues 1-21 (MAPALPWLLLWVGSGVLPVHG). The propeptide occupies 22–45 (TQDGIRLPLRSGLAGAPLGLRLPR). The Extracellular segment spans residues 22–429 (TQDGIRLPLR…PQTDESTLMT (408 aa)). In terms of domain architecture, Peptidase A1 spans 72 to 388 (YYVEMTVGSP…DRARKRIGFA (317 aa)). D90 is an active-site residue. At K123 the chain carries N6-acetyllysine. 3 N-linked (GlcNAc...) asparagine glycosylation sites follow: N150, N169, and N195. Cystine bridges form between C188–C392, C250–C415, and C302–C352. N6-acetyllysine occurs at positions 247, 251, and 257. The active site involves D261. N6-acetyllysine is present on residues K271, K272, and K279. Residue N326 is glycosylated (N-linked (GlcNAc...) asparagine). The helical transmembrane segment at 430-450 (IAYVMAAICALFMLPLCLMVC) threads the bilayer. Residues C446, C450, C454, and C457 are each lipidated (S-palmitoyl cysteine). The Cytoplasmic portion of the chain corresponds to 451-473 (QWRCLRCLRHQHDDFADDISLLK). An interaction with RTN3 region spans residues 451 to 473 (QWRCLRCLRHQHDDFADDISLLK). The DXXLL signature appears at 468–472 (DISLL). S470 is subject to Phosphoserine. A Glycyl lysine isopeptide (Lys-Gly) (interchain with G-Cter in ubiquitin) cross-link involves residue K473.

The protein belongs to the peptidase A1 family. As to quaternary structure, monomer. Interacts (via DXXLL motif) with GGA1, GGA2 and GGA3 (via their VHS domain); the interaction highly increases when BACE1 is phosphorylated at Ser-470. Interacts with RTN1; RTN2; RTN3 and RTN4; the interaction leads to inhibition of amyloid precursor protein processing. Interacts with SNX6. Interacts with PCSK9. Interacts with NAT8 and NAT8B. Interacts with BIN1. Interacts (via extracellular domain) with ADAM10 (via extracellular domain). Interacts with SORL1; this interaction may affect binding with APP and hence reduce APP cleavage. Interacts with NRDC AND NRG1. Post-translationally, palmitoylation mediates lipid raft localization. In terms of processing, acetylated in the endoplasmic reticulum at Lys-123, Lys-247, Lys-251, Lys-257, Lys-271, Lys-272, and Lys-279. Acetylation by NAT8 and NAT8B is transient and deacetylation probably occurs in the Golgi. Acetylation regulates the maturation, the transport to the plasma membrane, the stability and the expression of the protein. Ubiquitinated at Lys-473, ubiquitination leads to lysosomal degradation. Monoubiquitinated and 'Lys-63'-linked polyubitinated. Deubiquitnated by USP8; inhibits lysosomal degradation. Post-translationally, phosphorylation at Ser-470 is required for interaction with GGA1 and retrograded transport from endosomal compartments to the trans-Golgi network. Non-phosphorylated BACE1 enters a direct recycling route to the cell surface. In terms of processing, N-Glycosylated. Addition of a bisecting N-acetylglucosamine by MGAT3 blocks lysosomal targeting, further degradation and is required for maintaining stability under stress conditions.

The protein resides in the cell membrane. The protein localises to the golgi apparatus. It is found in the trans-Golgi network. Its subcellular location is the endoplasmic reticulum. It localises to the endosome. The protein resides in the cell surface. The protein localises to the cytoplasmic vesicle membrane. It is found in the membrane raft. Its subcellular location is the lysosome. It localises to the late endosome. The protein resides in the early endosome. The protein localises to the recycling endosome. It is found in the cell projection. Its subcellular location is the axon. It localises to the dendrite. It carries out the reaction Broad endopeptidase specificity. Cleaves Glu-Val-Asn-Leu-|-Asp-Ala-Glu-Phe in the Swedish variant of Alzheimer's amyloid precursor protein.. Inhibited by RTN3 and RTN4. In terms of biological role, responsible for the proteolytic processing of the amyloid precursor protein (APP). Cleaves at the N-terminus of the A-beta peptide sequence, between residues 671 and 672 of APP, leads to the generation and extracellular release of beta-cleaved soluble APP, and a corresponding cell-associated C-terminal fragment which is later released by gamma-secretase. Cleaves CHL1. This Cavia porcellus (Guinea pig) protein is Beta-secretase 1 (BACE1).